Reading from the N-terminus, the 458-residue chain is RuvB-like helicase 1 (458 aa).

Positions 1–29 are disordered; the sequence is MVQISEVKGNSRDNRTAAHTHIKGLGLRP. 71–78 contacts ATP; sequence GGPGTGKT.

Belongs to the RuvB family. May form heterododecamers with RVB2. Component of the SWR1 chromatin remodeling complex, the INO80 chromatin remodeling complex, and of the R2TP complex.

It localises to the nucleus. It catalyses the reaction ATP + H2O = ADP + phosphate + H(+). Its function is as follows. DNA helicase which participates in several chromatin remodeling complexes, including the SWR1 and the INO80 complexes. The SWR1 complex mediates the ATP-dependent exchange of histone H2A for the H2A variant HZT1 leading to transcriptional regulation of selected genes by chromatin remodeling. The INO80 complex remodels chromatin by shifting nucleosomes and is involved in DNA repair. Also involved in pre-rRNA processing. The polypeptide is RuvB-like helicase 1 (rvb1) (Emericella nidulans (strain FGSC A4 / ATCC 38163 / CBS 112.46 / NRRL 194 / M139) (Aspergillus nidulans)).